The primary structure comprises 390 residues: uncharacterized protein (390 aa).

The protein belongs to the arsA ATPase family.

This is an uncharacterized protein from Streptomyces coelicolor (strain ATCC BAA-471 / A3(2) / M145).